A 177-amino-acid chain; its full sequence is Bifunctional protein PyrR (177 aa).

The short motif at 99-111 (VILVDDVIYKGRT) is the PRPP-binding element.

Belongs to the purine/pyrimidine phosphoribosyltransferase family. PyrR subfamily.

It carries out the reaction UMP + diphosphate = 5-phospho-alpha-D-ribose 1-diphosphate + uracil. In terms of biological role, regulates the transcription of the pyrimidine nucleotide (pyr) operon in response to exogenous pyrimidines. Also displays a weak uracil phosphoribosyltransferase activity which is not physiologically significant. The chain is Bifunctional protein PyrR from Microcystis aeruginosa (strain NIES-843 / IAM M-2473).